The sequence spans 465 residues: Gamma-aminobutyric acid receptor subunit gamma-1 (465 aa).

The N-terminal stretch at 1–35 (MGPLKAFLFSPFLLRSQSRGVRLVFLLLTLHLGNC) is a signal peptide. Residues 36–273 (VDKADDEDDE…FDLSRRMGYF (238 aa)) lie on the Extracellular side of the membrane. 2 N-linked (GlcNAc...) asparagine glycosylation sites follow: Asn50 and Asn127. Cys188 and Cys202 form a disulfide bridge. Asn245 is a glycosylation site (N-linked (GlcNAc...) asparagine). A helical transmembrane segment spans residues 274-294 (TIQTYIPCILTVVLSWVSFWI). At 295 to 300 (NKDAVP) the chain is on the cytoplasmic side. A helical transmembrane segment spans residues 301 to 320 (ARTSLGITTVLTMTTLSTIA). Residues 321 to 328 (RKSLPKVS) are Extracellular-facing. A helical membrane pass occupies residues 329–349 (YVTAMDLFVSVCFIFVFAALM). Residues 350–444 (EYGTLHYFTS…RIAKIDSYSR (95 aa)) are Cytoplasmic-facing. The chain crosses the membrane as a helical span at residues 445–465 (IFFPTAFALFNLVYWVGYLYL).

Belongs to the ligand-gated ion channel (TC 1.A.9) family. Gamma-aminobutyric acid receptor (TC 1.A.9.5) subfamily. GABRG1 sub-subfamily. Heteropentamer, formed by a combination of alpha (GABRA1-6), beta (GABRB1-3), gamma (GABRG1-3), delta (GABRD), epsilon (GABRE), rho (GABRR1-3), pi (GABRP) and theta (GABRQ) chains, each subunit exhibiting distinct physiological and pharmacological properties. Post-translationally, may be palmitoylated.

It localises to the postsynaptic cell membrane. It is found in the cell membrane. The enzyme catalyses chloride(in) = chloride(out). In terms of biological role, gamma subunit of the heteropentameric ligand-gated chloride channel gated by gamma-aminobutyric acid (GABA), a major inhibitory neurotransmitter in the brain. GABA-gated chloride channels, also named GABA(A) receptors (GABAAR), consist of five subunits arranged around a central pore and contain GABA active binding site(s) located at the alpha and beta subunit interface(s). When activated by GABA, GABAARs selectively allow the flow of chloride anions across the cell membrane down their electrochemical gradient. Chloride influx into the postsynaptic neuron following GABAAR opening decreases the neuron ability to generate a new action potential, thereby reducing nerve transmission. The sequence is that of Gamma-aminobutyric acid receptor subunit gamma-1 from Homo sapiens (Human).